Reading from the N-terminus, the 202-residue chain is Lipoprotein signal peptidase (202 aa).

Residues 1–29 (MPDEPTGSADPLTSTEEAGGAGEPNAPAP) are disordered. The next 3 membrane-spanning stretches (helical) occupy residues 35–55 (MLLSVAVVVLTLDIVTKVVAV), 88–108 (GYTWVLTLIATGVVVGIFWMG), and 112–132 (VSPWWALGLGMILGGAMGNLV). Catalysis depends on residues Asp-148 and Asp-162. A helical transmembrane segment spans residues 160–180 (VADPSVVGGAILLVILSIFGF).

It belongs to the peptidase A8 family.

It is found in the cell membrane. It catalyses the reaction Release of signal peptides from bacterial membrane prolipoproteins. Hydrolyzes -Xaa-Yaa-Zaa-|-(S,diacylglyceryl)Cys-, in which Xaa is hydrophobic (preferably Leu), and Yaa (Ala or Ser) and Zaa (Gly or Ala) have small, neutral side chains.. The protein operates within protein modification; lipoprotein biosynthesis (signal peptide cleavage). This protein specifically catalyzes the removal of signal peptides from prolipoproteins. This Mycobacterium bovis (strain ATCC BAA-935 / AF2122/97) protein is Lipoprotein signal peptidase.